A 321-amino-acid chain; its full sequence is uncharacterized protein (321 aa).

This is an uncharacterized protein from Acanthamoeba polyphaga (Amoeba).